The following is a 233-amino-acid chain: Probable F-box protein At3g56670 (233 aa).

In terms of domain architecture, F-box spans His-22–Ser-69.

This Arabidopsis thaliana (Mouse-ear cress) protein is Probable F-box protein At3g56670.